A 392-amino-acid polypeptide reads, in one-letter code: Gastricsin (392 aa).

The first 16 residues, 1–16 (MKWMVVALLCLPLLEA), serve as a signal peptide directing secretion. Positions 17-62 (SLLRVPLRKMKSIRETMKEQGVLKDFLKTHKYDPGQKYHFGNFGDY) are cleaved as a propeptide — activation peptide. One can recognise a Peptidase A1 domain in the interval 76–389 (YFGEISIGTP…DMGNNKVGLA (314 aa)). Asp-94 is an active-site residue. Intrachain disulfides connect Cys-107-Cys-112 and Cys-270-Cys-275. Asp-280 is an active-site residue. The cysteines at positions 314 and 347 are disulfide-linked.

The protein belongs to the peptidase A1 family.

The protein resides in the secreted. It carries out the reaction More restricted specificity than pepsin A, but shows preferential cleavage at Tyr-|-Xaa bonds. High activity on hemoglobin.. Its function is as follows. Hydrolyzes a variety of proteins. This is Gastricsin (Pgc) from Rattus norvegicus (Rat).